Consider the following 276-residue polypeptide: Undecaprenyl-diphosphatase 2 (276 aa).

7 consecutive transmembrane segments (helical) span residues 3–23 (IWDIIVAIILGIVEGLTEYAP), 48–68 (AANTFKVVIQLGSILAVAFVF), 92–112 (LSIAQIAVGLVPAAVLGFLFE), 119–139 (LFSVRTVAVGLIAGAVLMLAA), 196–216 (ADFTFIMAIPIMMGASLLSLI), 225–245 (DLLPFFIAGFISAFIVALFVV), and 255–275 (IKLVPFAIYRIVLGLLLFILF).

This sequence belongs to the UppP family.

The protein resides in the cell membrane. It catalyses the reaction di-trans,octa-cis-undecaprenyl diphosphate + H2O = di-trans,octa-cis-undecaprenyl phosphate + phosphate + H(+). Functionally, catalyzes the dephosphorylation of undecaprenyl diphosphate (UPP). Confers resistance to bacitracin. The sequence is that of Undecaprenyl-diphosphatase 2 from Bacillus licheniformis (strain ATCC 14580 / DSM 13 / JCM 2505 / CCUG 7422 / NBRC 12200 / NCIMB 9375 / NCTC 10341 / NRRL NRS-1264 / Gibson 46).